A 581-amino-acid chain; its full sequence is Terpene synthase 2, chloroplastic (581 aa).

The transit peptide at 1–34 (MYSLPGATMSAAPASIISSSSFVEPLLLAAASPA) directs the protein to the chloroplast. Substrate contacts are provided by arginine 299, aspartate 336, aspartate 340, and arginine 480. Residues aspartate 336 and aspartate 340 each coordinate Mg(2+). Positions 336–340 (DDIFD) match the DDXXD motif motif. The Mg(2+) site is built by aspartate 483, serine 487, and glutamate 491.

It belongs to the terpene synthase family. Monomer. Mg(2+) is required as a cofactor.

The protein resides in the plastid. It is found in the chloroplast. It carries out the reaction (2E,6E)-farnesyl diphosphate + H2O = (3S,6E)-nerolidol + diphosphate. The catalysed reaction is (2E,6E,10E)-geranylgeranyl diphosphate + H2O = (6E,10E)-geranyllinalool + diphosphate. It catalyses the reaction (2E)-geranyl diphosphate + H2O = (S)-linalool + diphosphate. The protein operates within secondary metabolite biosynthesis; terpenoid biosynthesis. Involved in sesquiterpene (C15), diterpene (C20) and monoterpene (C10) biosynthesis. Has sesquiterpene synthase activity, converting farnesyl diphosphate to nerolidol, the precursor of the volatile C11-homoterpene (E)-3,8-dimethyl-1,4,7-nonatriene (DMNT). Has diterpene synthase activity, converting geranylgeranyl diphosphate to (E,E)-geranyllinalool, the precursor of the volatile C16-homoterpene (E,E)-4,8,12-trimethyltrideca 1,3,7,11-tetraene (TMTT). Has monoterpene synthase activity, converting geranyl diphosphate into linalool. Forms only the S-isomers of the three tertiary terpene alcohols. This is Terpene synthase 2, chloroplastic from Zea mays (Maize).